Consider the following 469-residue polypeptide: uncharacterized protein (469 aa).

Disordered stretches follow at residues 248-314 (RDDN…EPES) and 327-418 (QMDQ…PRPT). Polar residues-rich tracts occupy residues 292 to 305 (ESSNTRDQQTNAAS) and 350 to 365 (TARQPQVTPTRVPNTV). Residues 366–377 (TATSASTPASTS) are compositionally biased toward low complexity.

This is an uncharacterized protein from Cryphonectria parasitica (Chestnut blight fungus).